A 204-amino-acid chain; its full sequence is Copper-binding protein CutI (204 aa).

Positions 1 to 26 (MLKKIALTLCPAIVGSLLFFTAPASA) are cleaved as a signal peptide. 2 residues coordinate Cu(2+): His-27 and Glu-50. The Extracellular portion of the chain corresponds to 27 to 178 (HVSVKPAESA…DDSENSGSSA (152 aa)). A disordered region spans residues 146–176 (PHSITNITSAKQVTDEHGATKTEDDSENSGS). Residues 147 to 157 (HSITNITSAKQ) show a composition bias toward polar residues. The segment covering 158-168 (VTDEHGATKTE) has biased composition (basic and acidic residues). A helical membrane pass occupies residues 179–199 (LDITAMVLSAAAIILSVAALV). The Cytoplasmic segment spans residues 200–204 (KKKRA).

Its subcellular location is the cell membrane. Copper-binding protein that probably plays a role in copper homeostasis. May act as metallochaperone, possibly to facilitate copper uptake via the CutJ/YcnJ importer. Preferentially binds Cu in its oxidized Cu(II) state in a 1:1 stoichiometry. The chain is Copper-binding protein CutI from Bacillus subtilis (strain 168).